The following is a 119-amino-acid chain: Protein TusC (119 aa).

The protein belongs to the DsrF/TusC family. Heterohexamer, formed by a dimer of trimers. The hexameric TusBCD complex contains 2 copies each of TusB, TusC and TusD. The TusBCD complex interacts with TusE.

The protein resides in the cytoplasm. Part of a sulfur-relay system required for 2-thiolation of 5-methylaminomethyl-2-thiouridine (mnm(5)s(2)U) at tRNA wobble positions. The sequence is that of Protein TusC from Escherichia coli O157:H7.